The sequence spans 644 residues: Uromodulin (644 aa).

Residues 1–26 form the signal peptide; sequence MGQLLSLTWLLLVMVVTPWFTVAGAN. An EGF-like 1 domain is found at 30 to 66; it reads EARRCSECHDNATCVLDGVVTTCSCQAGFTGDGLVCE. Intrachain disulfides connect cysteine 34/cysteine 43, cysteine 37/cysteine 52, cysteine 54/cysteine 65, cysteine 71/cysteine 84, cysteine 79/cysteine 93, cysteine 95/cysteine 107, cysteine 113/cysteine 127, cysteine 121/cysteine 136, cysteine 138/cysteine 149, cysteine 151/cysteine 162, cysteine 156/cysteine 173, cysteine 177/cysteine 270, cysteine 198/cysteine 285, cysteine 220/cysteine 258, cysteine 226/cysteine 290, cysteine 251/cysteine 259, cysteine 300/cysteine 309, cysteine 303/cysteine 318, cysteine 320/cysteine 350, cysteine 338/cysteine 428, and cysteine 369/cysteine 392. An N-linked (GlcNAc...) asparagine glycan is attached at asparagine 40. The EGF-like 2; calcium-binding domain occupies 67–108; it reads DIDECATPWTHNCSNSICMNTLGSYECSCQDGFRLTPGLGCI. Asparagine 78 is a glycosylation site (N-linked (GlcNAc...) asparagine). One can recognise an EGF-like 3; calcium-binding domain in the interval 109-150; it reads DVNECTEQGLSNCHSLATCVNTEGSYSCVCPKGYRGDGWYCE. The tract at residues 151–174 is beta hairpin; it reads CSPGFCEPGLDCLPQGPSGKLVCQ. The interval 175 to 294 is D10C; sequence DPCNVYETLT…CNLAYCTDPS (120 aa). A glycan (N-linked (GlcNAc...) asparagine) is linked at asparagine 235. A glycan (N-linked (GlcNAc...) asparagine) is linked at asparagine 278. The EGF-like 4 domain occupies 295–326; that stretch reads SVEGTCEECGVDEDCVSDNGRWRCQCKQDFNV. N-linked (GlcNAc...) asparagine glycosylation is present at asparagine 325. The interval 337–432 is ZP-N; that stretch reads ECEANEIKIS…RINFECSYPL (96 aa). A ZP domain is found at 337-592; it reads ECEANEIKIS…PTCSGTRYRS (256 aa). N-linked (GlcNAc...) asparagine glycosylation is found at asparagine 399 and asparagine 450. The segment at 433–456 is flexible ZP-N/ZP-C linker; important for secretion and polymerization into filaments; the sequence is DMKVSLKTSLQPMVSALNISLGGT. Residues 457 to 467 are internal hydrophobic patch (IHP); that stretch reads GKFTVQMALFQ. Residues 457–592 are ZP-C; it reads GKFTVQMALF…PTCSGTRYRS (136 aa). Cystine bridges form between cysteine 509/cysteine 569, cysteine 530/cysteine 585, and cysteine 574/cysteine 581. N-linked (GlcNAc...) asparagine glycosylation occurs at asparagine 516. Residues 589–592 form an essential for cleavage by HPN region; it reads RYRS. An external hydrophobic patch (EHP); regulates polymerization into filaments region spans residues 601-609; that stretch reads VLNLGPITR. Serine 615 carries the GPI-anchor amidated serine lipid modification. Residues 616 to 644 constitute a propeptide, removed in mature form; that stretch reads VSKAASSNLGFLSIWLLLFLSATLTLMVH.

Homodimer that then polymerizes into long filaments. The filaments can additionally assemble laterally to form a sheet. The filaments consist of a zigzag-shaped backbone with laterally protruding arms which interact with bacterial adhesin fimH. Two fimH molecules can bind to a single UMOD monomer. In terms of processing, N-glycosylated. Post-translationally, proteolytically cleaved at a conserved C-terminal proteolytic cleavage site to generate the secreted form found in urine. This cleavage is catalyzed by HPN. Expression restricted to the thick ascending limb of the loop of Henle (TALH).

It localises to the apical cell membrane. The protein resides in the basolateral cell membrane. The protein localises to the cell projection. Its subcellular location is the cilium membrane. It is found in the secreted. Functions in biogenesis and organization of the apical membrane of epithelial cells of the thick ascending limb of Henle's loop (TALH), where it promotes formation of complex filamentous gel-like structure that may play a role in the water barrier permeability. May serve as a receptor for binding and endocytosis of cytokines (IL-1, IL-2) and TNF. Facilitates neutrophil migration across renal epithelia. In terms of biological role, in the urine, may contribute to colloid osmotic pressure, retards passage of positively charged electrolytes, and inhibits formation of liquid containing supersaturated salts and subsequent formation of salt crystals. Protects against urinary tract infections by binding to type 1 fimbriated E.coli. Binds to bacterial adhesin fimH which mediates the stable formation of bacterial aggregates, prevents the binding of E.coli to uroplakins UPK1A and UPK1B which act as urothelial receptors for type I fimbriae, and allows for pathogen clearance through micturation. Also promotes aggregation of other bacteria including K.pneumoniae, P.aeruginosa and S.mitis and so may also protect against other uropathogens. In Rattus norvegicus (Rat), this protein is Uromodulin (Umod).